Reading from the N-terminus, the 105-residue chain is Large ribosomal subunit protein uL24 (105 aa).

This sequence belongs to the universal ribosomal protein uL24 family. In terms of assembly, part of the 50S ribosomal subunit.

Functionally, one of two assembly initiator proteins, it binds directly to the 5'-end of the 23S rRNA, where it nucleates assembly of the 50S subunit. In terms of biological role, one of the proteins that surrounds the polypeptide exit tunnel on the outside of the subunit. The protein is Large ribosomal subunit protein uL24 of Xanthobacter autotrophicus (strain ATCC BAA-1158 / Py2).